A 175-amino-acid chain; its full sequence is Ribosome maturation factor RimM (175 aa).

The PRC barrel domain maps to 93–167 (DDEFYYSDLI…YIIITLPEVI (75 aa)).

Belongs to the RimM family. In terms of assembly, binds ribosomal protein uS19.

Its subcellular location is the cytoplasm. In terms of biological role, an accessory protein needed during the final step in the assembly of 30S ribosomal subunit, possibly for assembly of the head region. Essential for efficient processing of 16S rRNA. May be needed both before and after RbfA during the maturation of 16S rRNA. It has affinity for free ribosomal 30S subunits but not for 70S ribosomes. This Ehrlichia chaffeensis (strain ATCC CRL-10679 / Arkansas) protein is Ribosome maturation factor RimM.